The following is a 90-amino-acid chain: Beta-microseminoprotein (90 aa).

Cystine bridges form between Cys-2–Cys-16, Cys-34–Cys-70, Cys-37–Cys-46, Cys-39–Cys-47, and Cys-61–Cys-84. Val-90 is modified (valine amide).

The protein belongs to the beta-microseminoprotein family.

The protein localises to the secreted. In Struthio camelus (Common ostrich), this protein is Beta-microseminoprotein (MSMB).